We begin with the raw amino-acid sequence, 265 residues long: Serine protease harobin (265 aa).

An N-terminal signal peptide occupies residues 1–18 (MPLIRVLASLLILQLSYG). A propeptide spanning residues 19 to 33 (KSLDNGAKAITSLDR) is cleaved from the precursor. Positions 34–257 (IIGGFECNPS…YKDWIEGIIA (224 aa)) constitute a Peptidase S1 domain. Cystine bridges form between C40-C172, C59-C75, C106-C152, C107-C264, C151-C218, C183-C197, and C208-C233. The active-site Charge relay system is H74. N-linked (GlcNAc...) asparagine glycosylation is present at N112. The active-site Charge relay system is the D119. N-linked (GlcNAc...) asparagine glycosylation is present at N130. S212 serves as the catalytic Charge relay system.

It belongs to the peptidase S1 family. Snake venom subfamily. Monomer. Post-translationally, harobin contains three additional Cys residues than other snake venom serine proteases, suggesting an additional disulfide bond. In addition, it is more stable than other snake 6-disulfide-bond serine proteases, since it is less sensitive to DTT. As to expression, expressed by the venom gland.

It is found in the secreted. Its activity is regulated as follows. Inhibited by PMSF. Functionally, serine protein with fibrinolytic and fibrinogenolytic activities. Degrades Bbeta-chain (FGB) of fibrinogen first and then the Aalpha-chain (FGA). Gamma-chain (FGG) are also digested on prolonged incubation. In vitro, it cleaves high molecular weight (HMW) kininogen (KNG) releasing bradykinin that promotes vasodilation. In vitro and in vivo, it cleaves angiotensin-2 (AGT). This explains the reduction of blood pressure in hypertensive rats. Also has antithrombotic effects on thrombosis animal models. The chain is Serine protease harobin from Hydrophis hardwickii (Hardwick's spine-bellied seasnake).